The primary structure comprises 336 residues: UDP-N-acetylmuramoylpentapeptide-lysine N(6)-alanyltransferase (336 aa).

Residues 37-40, Y104, R212, Y216, and Y257 each bind substrate; that span reads KNNW.

It belongs to the FemABX family.

The enzyme catalyses UDP-N-acetyl-alpha-D-muramoyl-L-alanyl-gamma-D-glutamyl-L-lysyl-D-alanyl-D-alanine + L-alanyl-tRNA(Ala) = UDP-N-acetyl-alpha-D-muramoyl-L-alanyl-gamma-D-glutamyl-N(6)-(L-alanyl)-L-lysyl-D-alanyl-D-alanine + tRNA(Ala) + H(+). In terms of biological role, involved in the synthesis of the bacterial cell wall. Catalyzes the addition of alanine into the interchain peptide bridge of peptidoglycan precursor using aminoacyl-tRNA(Ala) as amino acid donor. This alanine is added to the epsilon-amino group of the L-lysine of the peptidoglycan UDP-N-acetyl-alpha-D-muramoyl-L-alanyl-D-glutamyl-L-lysyl-D-alanyl-D-alanine, in a ribosome-independent mechanism. Specific for UDP-N-acetyl-muramoyl-pentapeptide. Has no activity toward UDP-N-acetyl-muramoyl-tetrapeptide or UDP-N-acetyl-muramoyl-tripeptide. Also acts on L-seryl-tRNA(Ser). This is UDP-N-acetylmuramoylpentapeptide-lysine N(6)-alanyltransferase from Weissella viridescens (Lactobacillus viridescens).